Consider the following 210-residue polypeptide: Probable GTP-binding protein EngB (210 aa).

The 175-residue stretch at 25 to 199 (CGIEVAFAGR…RQKLDSWFSE (175 aa)) folds into the EngB-type G domain. GTP contacts are provided by residues 33–40 (GRSNAGKS), 60–64 (GRTQL), 78–81 (DLPG), 145–148 (TKAD), and 178–180 (FSS). Positions 40 and 62 each coordinate Mg(2+).

This sequence belongs to the TRAFAC class TrmE-Era-EngA-EngB-Septin-like GTPase superfamily. EngB GTPase family. Requires Mg(2+) as cofactor.

Necessary for normal cell division and for the maintenance of normal septation. This chain is Probable GTP-binding protein EngB, found in Salmonella dublin (strain CT_02021853).